The chain runs to 153 residues: Ribosome maturation factor RimP (153 aa).

The protein belongs to the RimP family.

It localises to the cytoplasm. Its function is as follows. Required for maturation of 30S ribosomal subunits. This chain is Ribosome maturation factor RimP, found in Histophilus somni (strain 2336) (Haemophilus somnus).